Here is a 298-residue protein sequence, read N- to C-terminus: Lipoyl synthase (298 aa).

The [4Fe-4S] cluster site is built by Cys-40, Cys-45, Cys-51, Cys-67, Cys-71, Cys-74, and Ser-280. The 217-residue stretch at 53-269 folds into the Radical SAM core domain; it reads AVRKTATFMI…KEIALSKGFS (217 aa).

Belongs to the radical SAM superfamily. Lipoyl synthase family. [4Fe-4S] cluster is required as a cofactor.

The protein resides in the cytoplasm. The enzyme catalyses [[Fe-S] cluster scaffold protein carrying a second [4Fe-4S](2+) cluster] + N(6)-octanoyl-L-lysyl-[protein] + 2 oxidized [2Fe-2S]-[ferredoxin] + 2 S-adenosyl-L-methionine + 4 H(+) = [[Fe-S] cluster scaffold protein] + N(6)-[(R)-dihydrolipoyl]-L-lysyl-[protein] + 4 Fe(3+) + 2 hydrogen sulfide + 2 5'-deoxyadenosine + 2 L-methionine + 2 reduced [2Fe-2S]-[ferredoxin]. Its pathway is protein modification; protein lipoylation via endogenous pathway; protein N(6)-(lipoyl)lysine from octanoyl-[acyl-carrier-protein]. Catalyzes the radical-mediated insertion of two sulfur atoms into the C-6 and C-8 positions of the octanoyl moiety bound to the lipoyl domains of lipoate-dependent enzymes, thereby converting the octanoylated domains into lipoylated derivatives. This Bacillus thuringiensis (strain Al Hakam) protein is Lipoyl synthase.